The chain runs to 560 residues: Probable pectinesterase/pectinesterase inhibitor 20 (560 aa).

The signal sequence occupies residues 1 to 24 (MSQKLMFLFTLACLSSLPSPFISA). The segment at 25–179 (QIPAIGNATS…TKLYGVSLAL (155 aa)) is pectinesterase inhibitor 20. Residues asparagine 31, asparagine 168, asparagine 251, asparagine 255, asparagine 268, asparagine 307, and asparagine 314 are each glycosylated (N-linked (GlcNAc...) asparagine). The segment at 246–544 (VTVIQNGTGN…FTVTNFLVGE (299 aa)) is pectinesterase 20. Threonine 323 serves as a coordination point for substrate. Asparagine 340 is a glycosylation site (N-linked (GlcNAc...) asparagine). Substrate is bound at residue glutamine 353. Catalysis depends on aspartate 376, which acts as the Proton donor; for pectinesterase activity. Cysteines 390 and 410 form a disulfide. Residue aspartate 397 is the Nucleophile; for pectinesterase activity of the active site. Residues 417-441 (PRKGQSNEVTAQGRTDPNQNTGTAI) form a disordered region. Polar residues predominate over residues 419-439 (KGQSNEVTAQGRTDPNQNTGT). Residue asparagine 456 is glycosylated (N-linked (GlcNAc...) asparagine). Arginine 465 and tryptophan 467 together coordinate substrate. Asparagine 507, asparagine 528, and asparagine 534 each carry an N-linked (GlcNAc...) asparagine glycan.

The protein in the N-terminal section; belongs to the PMEI family. In the C-terminal section; belongs to the pectinesterase family. In terms of tissue distribution, expressed in flower buds.

It localises to the secreted. It is found in the cell wall. The enzyme catalyses [(1-&gt;4)-alpha-D-galacturonosyl methyl ester](n) + n H2O = [(1-&gt;4)-alpha-D-galacturonosyl](n) + n methanol + n H(+). It functions in the pathway glycan metabolism; pectin degradation; 2-dehydro-3-deoxy-D-gluconate from pectin: step 1/5. Its function is as follows. Acts in the modification of cell walls via demethylesterification of cell wall pectin. This is Probable pectinesterase/pectinesterase inhibitor 20 (PME20) from Arabidopsis thaliana (Mouse-ear cress).